Consider the following 122-residue polypeptide: Small ribosomal subunit protein uS13 (122 aa).

Residues 99–122 (RGQRTHTNARTRKGPAKAIAGKKK) form a disordered region.

Belongs to the universal ribosomal protein uS13 family. In terms of assembly, part of the 30S ribosomal subunit. Forms a loose heterodimer with protein S19. Forms two bridges to the 50S subunit in the 70S ribosome.

In terms of biological role, located at the top of the head of the 30S subunit, it contacts several helices of the 16S rRNA. In the 70S ribosome it contacts the 23S rRNA (bridge B1a) and protein L5 of the 50S subunit (bridge B1b), connecting the 2 subunits; these bridges are implicated in subunit movement. Contacts the tRNAs in the A and P-sites. The polypeptide is Small ribosomal subunit protein uS13 (Bradyrhizobium diazoefficiens (strain JCM 10833 / BCRC 13528 / IAM 13628 / NBRC 14792 / USDA 110)).